The following is a 75-amino-acid chain: Penaeidin-3m (75 aa).

Residues 1–19 form the signal peptide; it reads MRLVVCLVFLASFALVCQG. Gln-20 is subject to Pyrrolidone carboxylic acid. Intrachain disulfides connect Cys-44–Cys-59, Cys-48–Cys-66, and Cys-60–Cys-67. Residue Ser-74 is modified to Serine amide.

The protein belongs to the penaeidin family.

The protein resides in the cytoplasmic granule. Antibacterial and antifungal activity. Presents chitin-binding activity. The chain is Penaeidin-3m from Penaeus setiferus (Atlantic white shrimp).